A 257-amino-acid polypeptide reads, in one-letter code: tRNA pseudouridine synthase A (257 aa).

The active-site Nucleophile is the Asp-57. Substrate is bound at residue Tyr-115.

The protein belongs to the tRNA pseudouridine synthase TruA family. Homodimer.

It catalyses the reaction uridine(38/39/40) in tRNA = pseudouridine(38/39/40) in tRNA. Functionally, formation of pseudouridine at positions 38, 39 and 40 in the anticodon stem and loop of transfer RNAs. The polypeptide is tRNA pseudouridine synthase A (Lawsonia intracellularis (strain PHE/MN1-00)).